Reading from the N-terminus, the 170-residue chain is Protein SOB FIVE-LIKE 5 (170 aa).

Positions 10–15 (SGWTLY) match the SOFL-A motif. Residues 17–78 (DQSVSSPSPS…GPRNISEEDS (62 aa)) form a disordered region. Over residues 35–44 (DSRRRSKDSW) the composition is skewed to basic and acidic residues. An SOFL-B motif is present at residues 61–70 (SMISDASSGP). The short motif at 79 to 86 (VKKINIVG) is the Nuclear localization signal element.

It belongs to the SOFL plant protein family. As to expression, expressed in seedlings, roots, flowers and siliques. Barely detectable in leaves.

The protein localises to the cytoplasm. Its subcellular location is the nucleus. In terms of biological role, involved in cytokinin-mediated development. This is Protein SOB FIVE-LIKE 5 from Arabidopsis thaliana (Mouse-ear cress).